The following is a 190-amino-acid chain: U1 small nuclear ribonucleoprotein C-1 (190 aa).

Residues tyrosine 4–aspartate 36 form a Matrin-type zinc finger. The interval phenylalanine 57–isoleucine 190 is disordered. The span at glycine 72–proline 82 shows a compositional bias: pro residues. Positions alanine 109–glycine 124 are enriched in low complexity. The span at serine 125 to methionine 141 shows a compositional bias: pro residues. Residues asparagine 180–isoleucine 190 show a composition bias toward basic and acidic residues.

This sequence belongs to the U1 small nuclear ribonucleoprotein C family. U1 snRNP is composed of the 7 core Sm proteins B/B', D1, D2, D3, E, F and G that assemble in a heptameric protein ring on the Sm site of the small nuclear RNA to form the core snRNP, and at least 3 U1 snRNP-specific proteins U1-70K, U1-A and U1-C. U1-C interacts with U1 snRNA and the 5' splice-site region of the pre-mRNA.

It is found in the nucleus. In terms of biological role, component of the spliceosomal U1 snRNP, which is essential for recognition of the pre-mRNA 5' splice-site and the subsequent assembly of the spliceosome. U1-C is directly involved in initial 5' splice-site recognition for both constitutive and regulated alternative splicing. The interaction with the 5' splice-site seems to precede base-pairing between the pre-mRNA and the U1 snRNA. Stimulates commitment or early (E) complex formation by stabilizing the base pairing of the 5' end of the U1 snRNA and the 5' splice-site region. In Puccinia graminis f. sp. tritici (strain CRL 75-36-700-3 / race SCCL) (Black stem rust fungus), this protein is U1 small nuclear ribonucleoprotein C-1.